A 156-amino-acid polypeptide reads, in one-letter code: ATP synthase subunit b (156 aa).

Residues 5–27 (ITLIGQMITFAIFVGFTMKFVWP) form a helical membrane-spanning segment.

The protein belongs to the ATPase B chain family. As to quaternary structure, F-type ATPases have 2 components, F(1) - the catalytic core - and F(0) - the membrane proton channel. F(1) has five subunits: alpha(3), beta(3), gamma(1), delta(1), epsilon(1). F(0) has three main subunits: a(1), b(2) and c(10-14). The alpha and beta chains form an alternating ring which encloses part of the gamma chain. F(1) is attached to F(0) by a central stalk formed by the gamma and epsilon chains, while a peripheral stalk is formed by the delta and b chains.

The protein localises to the cell inner membrane. Its function is as follows. F(1)F(0) ATP synthase produces ATP from ADP in the presence of a proton or sodium gradient. F-type ATPases consist of two structural domains, F(1) containing the extramembraneous catalytic core and F(0) containing the membrane proton channel, linked together by a central stalk and a peripheral stalk. During catalysis, ATP synthesis in the catalytic domain of F(1) is coupled via a rotary mechanism of the central stalk subunits to proton translocation. In terms of biological role, component of the F(0) channel, it forms part of the peripheral stalk, linking F(1) to F(0). The protein is ATP synthase subunit b of Francisella tularensis subsp. tularensis (strain SCHU S4 / Schu 4).